The sequence spans 302 residues: Endochitinase 2 (302 aa).

The Chitin-binding type-1 domain maps to 1–42 (EQCGRQAGGALCPGGLCCSQFGWCGSTADYCTVPGCQSQCSG). Disulfide bonds link Cys-3/Cys-18, Cys-12/Cys-24, Cys-17/Cys-31, Cys-36/Cys-40, Cys-73/Cys-136, Cys-148/Cys-156, and Cys-255/Cys-287. The Proton donor role is filled by Glu-117. Residues 296–302 (GVSVDSM) constitute a propeptide, removed in mature form.

This sequence belongs to the glycosyl hydrolase 19 family. Chitinase class I subfamily.

The enzyme catalyses Random endo-hydrolysis of N-acetyl-beta-D-glucosaminide (1-&gt;4)-beta-linkages in chitin and chitodextrins.. Defense against chitin-containing fungal pathogens. In Gossypium hirsutum (Upland cotton), this protein is Endochitinase 2.